Consider the following 1393-residue polypeptide: DNA-directed RNA polymerase subunit beta (1393 aa).

This sequence belongs to the RNA polymerase beta chain family. The RNAP catalytic core consists of 2 alpha, 1 beta, 1 beta' and 1 omega subunit. When a sigma factor is associated with the core the holoenzyme is formed, which can initiate transcription.

It catalyses the reaction RNA(n) + a ribonucleoside 5'-triphosphate = RNA(n+1) + diphosphate. Functionally, DNA-dependent RNA polymerase catalyzes the transcription of DNA into RNA using the four ribonucleoside triphosphates as substrates. The polypeptide is DNA-directed RNA polymerase subunit beta (Rhodospirillum rubrum (strain ATCC 11170 / ATH 1.1.1 / DSM 467 / LMG 4362 / NCIMB 8255 / S1)).